Reading from the N-terminus, the 379-residue chain is Putative 2-hydroxyacid dehydrogenase YGL185C (379 aa).

Residues 207–208, 291–293, and D317 contribute to the NAD(+) site; these read SI and LGR. Residue R293 is part of the active site. E322 is a catalytic residue. The Proton donor role is filled by H341. 341–344 is a binding site for NAD(+); it reads HLGS.

This sequence belongs to the D-isomer specific 2-hydroxyacid dehydrogenase family.

This Saccharomyces cerevisiae (strain ATCC 204508 / S288c) (Baker's yeast) protein is Putative 2-hydroxyacid dehydrogenase YGL185C.